Consider the following 600-residue polypeptide: DNA polymerase alpha subunit B (600 aa).

Residues 112-167 (AYTTPSKGPHKRVSSTPETPLTKRSISTRSPHQLLSPSSFSPSATPSQKYSSRTNR) are disordered. The span at 125–140 (SSTPETPLTKRSISTR) shows a compositional bias: polar residues. At Ser-126 the chain carries Phosphoserine. Thr-127 and Thr-130 each carry phosphothreonine. A phosphoserine mark is found at Ser-141, Ser-147, Ser-152, and Ser-154. Positions 141 to 158 (SPHQLLSPSSFSPSATPS) are enriched in low complexity.

This sequence belongs to the DNA polymerase alpha subunit B family. In terms of assembly, component of the alpha DNA polymerase complex (also known as the alpha DNA polymerase-primase complex) consisting of four subunits: the catalytic subunit POLA1, the regulatory subunit POLA2, and the primase complex subunits PRIM1 and PRIM2 respectively. Within the complex, POLA1 directly interacts with PRIM2. Phosphorylated in a cell cycle-dependent manner, in G2/M phase.

It localises to the nucleus. Its function is as follows. Accessory subunit of the DNA polymerase alpha complex (also known as the alpha DNA polymerase-primase complex) which plays an essential role in the initiation of DNA synthesis. During the S phase of the cell cycle, the DNA polymerase alpha complex (composed of a catalytic subunit POLA1, an accessory subunit POLA2 and two primase subunits, the catalytic subunit PRIM1 and the regulatory subunit PRIM2) is recruited to DNA at the replicative forks via direct interactions with MCM10 and WDHD1. The primase subunit of the polymerase alpha complex initiates DNA synthesis by oligomerising short RNA primers on both leading and lagging strands. These primers are initially extended by the polymerase alpha catalytic subunit and subsequently transferred to polymerase delta and polymerase epsilon for processive synthesis on the lagging and leading strand, respectively. This chain is DNA polymerase alpha subunit B (Pola2), found in Rattus norvegicus (Rat).